The sequence spans 63 residues: MNFNKIFVFVALILAISLGNTEAGWLRKLGKKIERIGQHTRDASIQVLGIAQQAANVAATARG.

The N-terminal stretch at 1–22 is a signal peptide; that stretch reads MNFNKIFVFVALILAISLGNTE. Arg-62 bears the Arginine amide mark.

This sequence belongs to the cecropin family.

The protein localises to the secreted. In terms of biological role, cecropins have lytic and antibacterial activity against several Gram-positive and Gram-negative bacteria. This is Cecropin-B (CecB) from Drosophila simulans (Fruit fly).